Consider the following 106-residue polypeptide: Thioredoxin-2 (106 aa).

Residues 2–106 (VYQIKDKADL…RLEDVIKANI (105 aa)) form the Thioredoxin domain. Residues cysteine 32 and cysteine 35 each act as nucleophile in the active site. The cysteines at positions 32 and 35 are disulfide-linked.

It belongs to the thioredoxin family.

In terms of biological role, participates in various redox reactions through the reversible oxidation of its active center dithiol to a disulfide and catalyzes dithiol-disulfide exchange reactions. As a reducing substrate of peroxiredoxin 1, thioredoxin 2 is preferred over thioredoxin 1. The protein is Thioredoxin-2 of Drosophila yakuba (Fruit fly).